The sequence spans 77 residues: Putative defensin-like protein 187 (77 aa).

Residues Met-1 to Ser-19 form the signal peptide. 3 cysteine pairs are disulfide-bonded: Cys-31–Cys-77, Cys-43–Cys-71, and Cys-47–Cys-73.

The protein belongs to the DEFL family.

The protein localises to the secreted. In Arabidopsis thaliana (Mouse-ear cress), this protein is Putative defensin-like protein 187 (LCR42).